A 468-amino-acid chain; its full sequence is Glutamate--tRNA ligase (468 aa).

The short motif at 9–19 is the 'HIGH' region element; the sequence is PSPTGSIHIGN. The 'KMSKS' region signature appears at 239–243; it reads KLSKR. Lys242 provides a ligand contact to ATP.

This sequence belongs to the class-I aminoacyl-tRNA synthetase family. Glutamate--tRNA ligase type 1 subfamily. Monomer.

The protein localises to the cytoplasm. The enzyme catalyses tRNA(Glu) + L-glutamate + ATP = L-glutamyl-tRNA(Glu) + AMP + diphosphate. Its function is as follows. Catalyzes the attachment of glutamate to tRNA(Glu) in a two-step reaction: glutamate is first activated by ATP to form Glu-AMP and then transferred to the acceptor end of tRNA(Glu). The protein is Glutamate--tRNA ligase of Blochmanniella pennsylvanica (strain BPEN).